A 348-amino-acid chain; its full sequence is N-formyl peptide receptor 2 (348 aa).

The N-linked (GlcNAc...) asparagine glycan is linked to Asn1. Residues 1–24 (NFSTPLNEHEEVSYESAGYTVLRI) are Extracellular-facing. A helical membrane pass occupies residues 25-47 (LPLVVLGVTFVLGVLGNGLVIWV). Topologically, residues 48–58 (AGFRMTRTVTT) are cytoplasmic. Residues 59–80 (ICYLNLALADFSFTATLPFLIV) form a helical membrane-spanning segment. Residues 81 to 97 (SMAMGEKWPFGWFLCKL) are Extracellular-facing. An intrachain disulfide couples Cys95 to Cys173. Residues 98–118 (IHIVVDINLFGSVFLIGFIAL) traverse the membrane as a helical segment. At 119 to 137 (DRCICVLHPVWAQNHRTVS) the chain is on the cytoplasmic side. Residues 138-159 (LAMKVIVGPWILALVLTLPVFL) form a helical membrane-spanning segment. At 160 to 202 (FLTTVTIPNGDTYCTFNFASWGGTPEERQKVAITMLTARGIIR) the chain is on the extracellular side. Residues 203 to 223 (FVIGFSLPMSIVAICYGLIAA) form a helical membrane-spanning segment. The Cytoplasmic portion of the chain corresponds to 224-239 (KIHKKGMIKSSRPLRV). Residues 240 to 263 (LTAVVASFFICWFPFQLVALLGTV) traverse the membrane as a helical segment. The Extracellular segment spans residues 264–283 (WLKEMLFYGKYKIIDILVNP). A helical transmembrane segment spans residues 284-303 (TSSLAFFNSCLNPMLYVFVG). Over 304–348 (QDFRERLIHSLPTSLERALSEDSAPTNDTAASCASPPAETELQAM) the chain is Cytoplasmic. A disordered region spans residues 323-348 (SEDSAPTNDTAASCASPPAETELQAM). The segment covering 326–335 (SAPTNDTAAS) has biased composition (polar residues).

The protein belongs to the G-protein coupled receptor 1 family. Interacts with APP; the interaction takes place at the cell surface and the complex is then rapidly internalized.

It is found in the cell membrane. Low affinity receptor for N-formyl-methionyl peptides, which are powerful neutrophil chemotactic factors. Binding of FMLP to the receptor causes activation of neutrophils. This response is mediated via a G-protein that activates a phosphatidylinositol-calcium second messenger system. Receptor for the chemokine-like protein FAM19A5, mediating FAM19A5-stimulated macrophage chemotaxis and the inhibitory effect on TNFSF11/RANKL-induced osteoclast differentiation. This chain is N-formyl peptide receptor 2 (FPR2), found in Gorilla gorilla gorilla (Western lowland gorilla).